A 328-amino-acid chain; its full sequence is Tetraacyldisaccharide 4'-kinase (328 aa).

Residue 55-62 (TAGGNGKT) coordinates ATP.

Belongs to the LpxK family.

It catalyses the reaction a lipid A disaccharide + ATP = a lipid IVA + ADP + H(+). It participates in glycolipid biosynthesis; lipid IV(A) biosynthesis; lipid IV(A) from (3R)-3-hydroxytetradecanoyl-[acyl-carrier-protein] and UDP-N-acetyl-alpha-D-glucosamine: step 6/6. Its function is as follows. Transfers the gamma-phosphate of ATP to the 4'-position of a tetraacyldisaccharide 1-phosphate intermediate (termed DS-1-P) to form tetraacyldisaccharide 1,4'-bis-phosphate (lipid IVA). The protein is Tetraacyldisaccharide 4'-kinase of Escherichia coli O45:K1 (strain S88 / ExPEC).